Here is a 444-residue protein sequence, read N- to C-terminus: Tubulin beta chain (444 aa).

Residues Gln11, Glu68, Ser137, Gly141, Thr142, Gly143, Asn203, and Asn225 each contribute to the GTP site. Glu68 provides a ligand contact to Mg(2+). The segment at 424 to 444 (QDATAEEEGEFDEDEEMDEMM) is disordered. A compositionally biased stretch (acidic residues) spans 427–444 (TAEEEGEFDEDEEMDEMM).

Belongs to the tubulin family. In terms of assembly, dimer of alpha and beta chains. A typical microtubule is a hollow water-filled tube with an outer diameter of 25 nm and an inner diameter of 15 nM. Alpha-beta heterodimers associate head-to-tail to form protofilaments running lengthwise along the microtubule wall with the beta-tubulin subunit facing the microtubule plus end conferring a structural polarity. Microtubules usually have 13 protofilaments but different protofilament numbers can be found in some organisms and specialized cells. It depends on Mg(2+) as a cofactor.

Its subcellular location is the cytoplasm. It is found in the cytoskeleton. Functionally, tubulin is the major constituent of microtubules, a cylinder consisting of laterally associated linear protofilaments composed of alpha- and beta-tubulin heterodimers. Microtubules grow by the addition of GTP-tubulin dimers to the microtubule end, where a stabilizing cap forms. Below the cap, tubulin dimers are in GDP-bound state, owing to GTPase activity of alpha-tubulin. This is Tubulin beta chain from Achlya klebsiana.